The chain runs to 209 residues: Holliday junction branch migration complex subunit RuvA (209 aa).

The domain I stretch occupies residues M1–G70. The domain II stretch occupies residues T71–T149. A flexible linker region spans residues T150 to A158. The domain III stretch occupies residues A158 to G209.

Belongs to the RuvA family. In terms of assembly, homotetramer. Forms an RuvA(8)-RuvB(12)-Holliday junction (HJ) complex. HJ DNA is sandwiched between 2 RuvA tetramers; dsDNA enters through RuvA and exits via RuvB. An RuvB hexamer assembles on each DNA strand where it exits the tetramer. Each RuvB hexamer is contacted by two RuvA subunits (via domain III) on 2 adjacent RuvB subunits; this complex drives branch migration. In the full resolvosome a probable DNA-RuvA(4)-RuvB(12)-RuvC(2) complex forms which resolves the HJ.

Its subcellular location is the cytoplasm. The RuvA-RuvB-RuvC complex processes Holliday junction (HJ) DNA during genetic recombination and DNA repair, while the RuvA-RuvB complex plays an important role in the rescue of blocked DNA replication forks via replication fork reversal (RFR). RuvA specifically binds to HJ cruciform DNA, conferring on it an open structure. The RuvB hexamer acts as an ATP-dependent pump, pulling dsDNA into and through the RuvAB complex. HJ branch migration allows RuvC to scan DNA until it finds its consensus sequence, where it cleaves and resolves the cruciform DNA. This Microcystis aeruginosa (strain NIES-843 / IAM M-2473) protein is Holliday junction branch migration complex subunit RuvA.